Reading from the N-terminus, the 520-residue chain is Peptide chain release factor 3 (520 aa).

Positions 8-277 (ESRKTFAIIS…HAPMPNARQT (270 aa)) constitute a tr-type G domain. GTP-binding positions include 17–24 (SHPDAGKT), 85–89 (DTPGH), and 139–142 (NKLD).

The protein belongs to the TRAFAC class translation factor GTPase superfamily. Classic translation factor GTPase family. PrfC subfamily.

The protein resides in the cytoplasm. Functionally, increases the formation of ribosomal termination complexes and stimulates activities of RF-1 and RF-2. It binds guanine nucleotides and has strong preference for UGA stop codons. It may interact directly with the ribosome. The stimulation of RF-1 and RF-2 is significantly reduced by GTP and GDP, but not by GMP. The sequence is that of Peptide chain release factor 3 from Staphylococcus haemolyticus (strain JCSC1435).